We begin with the raw amino-acid sequence, 566 residues long: Chaperone Ric-8 (566 aa).

The protein belongs to the synembryn family. Interacts with GDP-bound G(i)-alpha protein. Does not interact with G-alpha proteins when they are in complex with subunits beta and gamma. Interacts with Frq2 in a Ca(2+)-independent manner but does not interact with Frq1.

It is found in the cytoplasm. It localises to the cell cortex. The protein localises to the presynapse. Chaperone that specifically binds and folds some, but not all, nascent G alpha proteins prior to G protein heterotrimer formation, promoting their stability and activity. Also acts as a guanine nucleotide exchange factor (GEF) for G alpha proteins by stimulating exchange of bound GDP for free GTP. Plays a key role in asymmetric spindle positioning, a step for asymmetric cell division that generates cell diversity during development by activating G(i) alpha protein independently of G-protein coupled receptors. Required during gastrulation and sensory organ precursor (SOP) formation. Plays a role in positively regulating synapse number and neurotransmitter release. This Drosophila pseudoobscura pseudoobscura (Fruit fly) protein is Chaperone Ric-8 (ric8a).